A 181-amino-acid chain; its full sequence is Protein GrpE (181 aa).

A compositionally biased stretch (polar residues) spans 1-13 (MENTQENPATQSA). The disordered stretch occupies residues 1 to 39 (MENTQENPATQSAEDIGSEKQAAQGAAPAAEAADAALAE). Residues 21–39 (QAAQGAAPAAEAADAALAE) are compositionally biased toward low complexity.

Belongs to the GrpE family. As to quaternary structure, homodimer.

The protein localises to the cytoplasm. In terms of biological role, participates actively in the response to hyperosmotic and heat shock by preventing the aggregation of stress-denatured proteins, in association with DnaK and GrpE. It is the nucleotide exchange factor for DnaK and may function as a thermosensor. Unfolded proteins bind initially to DnaJ; upon interaction with the DnaJ-bound protein, DnaK hydrolyzes its bound ATP, resulting in the formation of a stable complex. GrpE releases ADP from DnaK; ATP binding to DnaK triggers the release of the substrate protein, thus completing the reaction cycle. Several rounds of ATP-dependent interactions between DnaJ, DnaK and GrpE are required for fully efficient folding. The protein is Protein GrpE of Burkholderia lata (strain ATCC 17760 / DSM 23089 / LMG 22485 / NCIMB 9086 / R18194 / 383).